A 42-amino-acid polypeptide reads, in one-letter code: Photosystem II reaction center protein J (42 aa).

Residues 10–30 (IPLWLVGTVVGIAALTLLSVF) form a helical membrane-spanning segment.

The protein belongs to the PsbJ family. As to quaternary structure, PSII is composed of 1 copy each of membrane proteins PsbA, PsbB, PsbC, PsbD, PsbE, PsbF, PsbH, PsbI, PsbJ, PsbK, PsbL, PsbM, PsbT, PsbX, PsbY, PsbZ, Psb30/Ycf12, at least 3 peripheral proteins of the oxygen-evolving complex and a large number of cofactors. It forms dimeric complexes.

The protein localises to the plastid. Its subcellular location is the chloroplast thylakoid membrane. In terms of biological role, one of the components of the core complex of photosystem II (PSII). PSII is a light-driven water:plastoquinone oxidoreductase that uses light energy to abstract electrons from H(2)O, generating O(2) and a proton gradient subsequently used for ATP formation. It consists of a core antenna complex that captures photons, and an electron transfer chain that converts photonic excitation into a charge separation. The protein is Photosystem II reaction center protein J of Tupiella akineta (Green alga).